Consider the following 419-residue polypeptide: Multifunctional CCA protein (419 aa).

G8 and R11 together coordinate ATP. Positions 8 and 11 each coordinate CTP. D21 and D23 together coordinate Mg(2+). The ATP site is built by R91, R137, and R140. Residues R91, R137, and R140 each contribute to the CTP site. In terms of domain architecture, HD spans 226-327; that stretch reads TGVHLMMVLD…VRLFDRCDAW (102 aa).

This sequence belongs to the tRNA nucleotidyltransferase/poly(A) polymerase family. Bacterial CCA-adding enzyme type 1 subfamily. In terms of assembly, monomer. Can also form homodimers and oligomers. Mg(2+) is required as a cofactor. Ni(2+) serves as cofactor.

The catalysed reaction is a tRNA precursor + 2 CTP + ATP = a tRNA with a 3' CCA end + 3 diphosphate. It catalyses the reaction a tRNA with a 3' CCA end + 2 CTP + ATP = a tRNA with a 3' CCACCA end + 3 diphosphate. Its function is as follows. Catalyzes the addition and repair of the essential 3'-terminal CCA sequence in tRNAs without using a nucleic acid template. Adds these three nucleotides in the order of C, C, and A to the tRNA nucleotide-73, using CTP and ATP as substrates and producing inorganic pyrophosphate. tRNA 3'-terminal CCA addition is required both for tRNA processing and repair. Also involved in tRNA surveillance by mediating tandem CCA addition to generate a CCACCA at the 3' terminus of unstable tRNAs. While stable tRNAs receive only 3'-terminal CCA, unstable tRNAs are marked with CCACCA and rapidly degraded. This is Multifunctional CCA protein from Leptothrix cholodnii (strain ATCC 51168 / LMG 8142 / SP-6) (Leptothrix discophora (strain SP-6)).